A 208-amino-acid polypeptide reads, in one-letter code: Uracil phosphoribosyltransferase (208 aa).

Residues arginine 78, arginine 103, and 130 to 138 (DPMLATGGS) contribute to the 5-phospho-alpha-D-ribose 1-diphosphate site. Uracil is bound by residues isoleucine 193 and 198 to 200 (GDA). Aspartate 199 contacts 5-phospho-alpha-D-ribose 1-diphosphate.

The protein belongs to the UPRTase family. It depends on Mg(2+) as a cofactor.

It catalyses the reaction UMP + diphosphate = 5-phospho-alpha-D-ribose 1-diphosphate + uracil. It functions in the pathway pyrimidine metabolism; UMP biosynthesis via salvage pathway; UMP from uracil: step 1/1. Allosterically activated by GTP. Catalyzes the conversion of uracil and 5-phospho-alpha-D-ribose 1-diphosphate (PRPP) to UMP and diphosphate. The chain is Uracil phosphoribosyltransferase from Desulfovibrio desulfuricans (strain ATCC 27774 / DSM 6949 / MB).